The sequence spans 629 residues: Long-chain-fatty-acid--AMP ligase FadD32 (629 aa).

ATP contacts are provided by residues 186–191 (TSGSTR), Ser-341, Ala-345, Asp-468, and Arg-482.

This sequence belongs to the ATP-dependent AMP-binding enzyme family. Monomer.

It carries out the reaction a long-chain fatty acid + holo-[ACP] + ATP = a long-chain fatty acyl-[ACP] + AMP + diphosphate. The enzyme catalyses dodecanoate + ATP + H(+) = dodecanoyl-AMP + diphosphate. The catalysed reaction is tetradecanoate + ATP + H(+) = tetradecanoyl-AMP + diphosphate. It participates in lipid metabolism; mycolic acid biosynthesis. The acyl-AMP ligase activity is inhibited by the alkylphosphate esters of AMP, adenosine 50-dodecylphosphate (AMPC12) and eicosyl-AMP (AMPC20). Functionally, involved in the biosynthesis of mycolic acids. Catalyzes the activation of long-chain fatty acids as acyl-adenylates (acyl-AMP), which are then transferred to the phosphopantetheine arm of the polyketide synthase Pks13 for further chain extension. Can use dodecanoate (C12) and tetradecanoate (C14). The sequence is that of Long-chain-fatty-acid--AMP ligase FadD32 (fadD32) from Mycobacterium marinum (strain ATCC BAA-535 / M).